We begin with the raw amino-acid sequence, 130 residues long: Large ribosomal subunit protein bL20 (130 aa).

It belongs to the bacterial ribosomal protein bL20 family.

Binds directly to 23S ribosomal RNA and is necessary for the in vitro assembly process of the 50S ribosomal subunit. It is not involved in the protein synthesizing functions of that subunit. This chain is Large ribosomal subunit protein bL20, found in Clavibacter michiganensis subsp. michiganensis (strain NCPPB 382).